Reading from the N-terminus, the 169-residue chain is Lutropin/choriogonadotropin subunit beta (169 aa).

The signal sequence occupies residues 1 to 20; the sequence is METLQGLLLWMLLSVGGVWA. 6 disulfides stabilise this stretch: cysteine 29–cysteine 77, cysteine 43–cysteine 92, cysteine 46–cysteine 130, cysteine 54–cysteine 108, cysteine 58–cysteine 110, and cysteine 113–cysteine 120. N-linked (GlcNAc...) asparagine glycosylation occurs at asparagine 33. Positions 131 to 169 are disordered; it reads APQASSSSKDPPSQPLTSTSTPTPGASRRSSHPLPIKTS. O-linked (GalNAc...) serine glycans are attached at residues serine 138 and serine 143. Residues 145–158 show a composition bias toward low complexity; sequence PLTSTSTPTPGASR. O-linked (GalNAc...) threonine glycosylation is present at threonine 147. A glycan (O-linked (GalNAc...) serine) is linked at serine 148. Threonine 149 is a glycosylation site (O-linked (GalNAc...) threonine). A glycan (O-linked (GalNAc...) serine) is linked at serine 150. O-linked (GalNAc...) threonine glycosylation is found at threonine 151 and threonine 153. O-linked (GalNAc...) serine glycans are attached at residues serine 157, serine 160, serine 161, and serine 169.

Belongs to the glycoprotein hormones subunit beta family. As to quaternary structure, heterodimer of a common alpha chain and a unique beta chain which confers biological specificity to thyrotropin, lutropin, follitropin and gonadotropin. Microheterogeneity at Asn-33. O-glycosylation appears to be responsible for the beta subunit contribution to the difference in LH-receptor binding activity between LSH-B and CG-B.

It is found in the secreted. Promotes spermatogenesis and ovulation by stimulating the testes and ovaries to synthesize steroids. In Equus caballus (Horse), this protein is Lutropin/choriogonadotropin subunit beta (LHB).